We begin with the raw amino-acid sequence, 273 residues long: Transposon Tn7 transposition protein TnsA (273 aa).

Residues Glu63 and Glu73 contribute to the active site. The segment at residues Thr90–Asp108 is a DNA-binding region (H-T-H motif). Asp114 is an active-site residue. 3 residues coordinate Mg(2+): Asp114, Gln130, and Val131. Lys132 is an active-site residue.

Heteromer with TnsB. Interacts with TnsC (via C-terminus); this interaction allows TnsA to bind donor DNA. Mg(2+) is required as a cofactor. It depends on Mn(2+) as a cofactor.

Required for Tn7 transposition. Forms the transposase, together with TnsB. TnsA executes the 5'-DNA strand breakage reaction. TnsABC and TnsD promote high-frequency insertion of Tn7 into a specific target site known as att-Tn7 whereas TnsABC and TnsE promote low-frequency insertion into many different sites. The polypeptide is Transposon Tn7 transposition protein TnsA (Escherichia coli).